A 93-amino-acid chain; its full sequence is Small ribosomal subunit protein uS19 (93 aa).

Belongs to the universal ribosomal protein uS19 family.

Its function is as follows. Protein S19 forms a complex with S13 that binds strongly to the 16S ribosomal RNA. In Helicobacter pylori (strain ATCC 700392 / 26695) (Campylobacter pylori), this protein is Small ribosomal subunit protein uS19 (rpsS).